A 131-amino-acid chain; its full sequence is Photosystem II extrinsic protein U (131 aa).

Positions 1 to 28 (MKFISRLLVACSLLIGLMGFLGADLAQA) are cleaved as a signal peptide. Positions 29 to 36 (LTPNPILA) are excised as a propeptide.

This sequence belongs to the PsbU family. As to quaternary structure, PSII is composed of 1 copy each of membrane proteins PsbA, PsbB, PsbC, PsbD, PsbE, PsbF, PsbH, PsbI, PsbJ, PsbK, PsbL, PsbM, PsbT, PsbX, PsbY, PsbZ, Psb30/Ycf12, peripheral proteins PsbO, CyanoQ (PsbQ), PsbU, PsbV and a large number of cofactors. It forms dimeric complexes.

The protein localises to the cellular thylakoid membrane. Functionally, one of the extrinsic, lumenal subunits of photosystem II (PSII). PSII is a light-driven water plastoquinone oxidoreductase, using light energy to abstract electrons from H(2)O, generating a proton gradient subsequently used for ATP formation. The extrinsic proteins stabilize the structure of photosystem II oxygen-evolving complex (OEC), the ion environment of oxygen evolution and protect the OEC against heat-induced inactivation. May modulate the Cl(-) requirement for oxygen evolution. This chain is Photosystem II extrinsic protein U, found in Synechocystis sp. (strain ATCC 27184 / PCC 6803 / Kazusa).